Reading from the N-terminus, the 943-residue chain is Receptor-like protein 35 (943 aa).

The N-terminal stretch at M1 to A31 is a signal peptide. Topologically, residues A32 to W897 are extracellular. Residues N67, N82, N118, N147, N171, N195, N219, and N222 are each glycosylated (N-linked (GlcNAc...) asparagine). 11 LRR repeats span residues L124–L148, H150–N171, L172–L196, H198–L220, N222–L244, A245–N267, L268–L292, T293–S317, L319–I340, P341–S364, and S366–F389. 2 N-linked (GlcNAc...) asparagine glycosylation sites follow: N291 and N312. 2 N-linked (GlcNAc...) asparagine glycosylation sites follow: N354 and N361. The LRR 12; degenerate repeat unit spans residues V390–H414. N-linked (GlcNAc...) asparagine glycosylation is present at N391. LRR repeat units lie at residues L415 to Y439, F440 to S463, S467 to Q490, H491 to L514, P515 to H537, K544 to L568, R569 to L592, K593 to S617, R619 to F639, S640 to K665, Q667 to F685, P686 to K709, L753 to L777, K778 to L801, T802 to L825, and F827 to R850. Residue N457 is glycosylated (N-linked (GlcNAc...) asparagine). N-linked (GlcNAc...) asparagine glycosylation is found at N521, N524, N556, N582, and N605. N-linked (GlcNAc...) asparagine glycosylation occurs at N653. A glycan (N-linked (GlcNAc...) asparagine) is linked at N699. Residues N784 and N800 are each glycosylated (N-linked (GlcNAc...) asparagine). 3 N-linked (GlcNAc...) asparagine glycosylation sites follow: N832, N852, and N882. The chain crosses the membrane as a helical span at residues I898–L918. At V919–H943 the chain is on the cytoplasmic side.

This sequence belongs to the RLP family.

Its subcellular location is the cell membrane. This Arabidopsis thaliana (Mouse-ear cress) protein is Receptor-like protein 35.